The following is a 241-amino-acid chain: MRIIPAIDIIDGKCVRLSKGDYNTKIIYNENPLEVAKKFEAHGVQYLHLVDLDGAKSSQIINYKILEKIASQTALKIDFGGGLKSDNDLRIAFESGANQITGGSIAVKNPEVFNEWIIKYGADKIILGADANNEKVAISGWLEESKEELIPFIQNYQNQGIEYVICTDIAKDGMLAGPSFNLYAKILSETKGIKLIASGGISTFDELPKLAQLGCEGTIIGKAIYENRITLKQLENFILNK.

The active-site Proton acceptor is aspartate 8. The Proton donor role is filled by aspartate 130.

This sequence belongs to the HisA/HisF family.

The protein resides in the cytoplasm. It carries out the reaction 1-(5-phospho-beta-D-ribosyl)-5-[(5-phospho-beta-D-ribosylamino)methylideneamino]imidazole-4-carboxamide = 5-[(5-phospho-1-deoxy-D-ribulos-1-ylimino)methylamino]-1-(5-phospho-beta-D-ribosyl)imidazole-4-carboxamide. It participates in amino-acid biosynthesis; L-histidine biosynthesis; L-histidine from 5-phospho-alpha-D-ribose 1-diphosphate: step 4/9. In Flavobacterium psychrophilum (strain ATCC 49511 / DSM 21280 / CIP 103535 / JIP02/86), this protein is 1-(5-phosphoribosyl)-5-[(5-phosphoribosylamino)methylideneamino] imidazole-4-carboxamide isomerase.